The sequence spans 117 residues: MARVTVEDCVDKVPNRFELVMLAAHRAREISAGAELTVDRDNDKNPVVSLREIAEETQSADALRERLIESNQSQIEVDEPEEDSMALLMGGEADKPQEDDMSEEKLLRALMEAQGQG.

This sequence belongs to the RNA polymerase subunit omega family. As to quaternary structure, the RNAP catalytic core consists of 2 alpha, 1 beta, 1 beta' and 1 omega subunit. When a sigma factor is associated with the core the holoenzyme is formed, which can initiate transcription.

The enzyme catalyses RNA(n) + a ribonucleoside 5'-triphosphate = RNA(n+1) + diphosphate. Promotes RNA polymerase assembly. Latches the N- and C-terminal regions of the beta' subunit thereby facilitating its interaction with the beta and alpha subunits. This Ruegeria sp. (strain TM1040) (Silicibacter sp.) protein is DNA-directed RNA polymerase subunit omega.